The primary structure comprises 937 residues: DNA mismatch repair protein msh-2 (937 aa).

Position 659–666 (659–666 (GPNMGGKS)) interacts with ATP.

Belongs to the DNA mismatch repair MutS family. As to quaternary structure, heterodimer of msh2 and msh6.

The protein localises to the nucleus. Involved in post-replicative DNA-mismatch repair. Binds to mismatch-containing DNA. The sequence is that of DNA mismatch repair protein msh-2 (msh-2) from Neurospora crassa (strain ATCC 24698 / 74-OR23-1A / CBS 708.71 / DSM 1257 / FGSC 987).